A 326-amino-acid chain; its full sequence is Nucleoporin Nup37 (326 aa).

4 WD repeats span residues 70–117 (HHGV…KNEY), 122–162 (GHSD…TAHF), 164–203 (LHSP…AILS), and 294–325 (GSVA…WVTE).

In terms of assembly, component of the Nup107-160 subcomplex of the nuclear pore complex (NPC). The Nup107-160 subcomplex includes NUP160, NUP133, NUP107, NUP98, NUP85, NUP43, NUP37, SEH1 and SEC13.

It localises to the chromosome. It is found in the centromere. The protein resides in the kinetochore. Its subcellular location is the nucleus. The protein localises to the nuclear pore complex. Its function is as follows. Component of the Nup107-160 subcomplex of the nuclear pore complex (NPC). The Nup107-160 subcomplex is required for the assembly of a functional NPC. The Nup107-160 subcomplex is also required for normal kinetochore microtubule attachment, mitotic progression and chromosome segregation. This Mus musculus (Mouse) protein is Nucleoporin Nup37 (Nup37).